A 234-amino-acid polypeptide reads, in one-letter code: Transcriptional regulatory protein WalR (234 aa).

One can recognise a Response regulatory domain in the interval 3–116 (KILIVDDEKP…ELQARVKALL (114 aa)). At Asp52 the chain carries 4-aspartylphosphate. A DNA-binding region (ompR/PhoB-type) is located at residues 133-232 (PQPIQIGDLE…RRGVGYYMRN (100 aa)).

Monomer. Homodimer. Post-translationally, phosphorylated by WalK; can also be dephosphorylated by WalK.

The protein localises to the cytoplasm. Functionally, member of the two-component regulatory system WalK/WalR that regulates genes involved in cell wall metabolism. Binds to the promoter region of the transcription factor fabT gene in the fabTH-acp operon in vitro. Inhibits transcription of fabT, probably acting in an unphosphorylated form, thereby playing a role in the regulation of fatty acid biosynthesis. Essential for normal growth in vitro. Required for maintaining normal cellular morphology, acting, at least in part, by regulating peptidoglycan hydrolase pcsB. Involved in maintaining expression of WalRK regulon genes in exponentially growing cells. The protein is Transcriptional regulatory protein WalR of Streptococcus pneumoniae serotype 2 (strain D39 / NCTC 7466).